Consider the following 233-residue polypeptide: Leucyl/phenylalanyl-tRNA--protein transferase (233 aa).

It belongs to the L/F-transferase family.

It is found in the cytoplasm. It carries out the reaction N-terminal L-lysyl-[protein] + L-leucyl-tRNA(Leu) = N-terminal L-leucyl-L-lysyl-[protein] + tRNA(Leu) + H(+). The enzyme catalyses N-terminal L-arginyl-[protein] + L-leucyl-tRNA(Leu) = N-terminal L-leucyl-L-arginyl-[protein] + tRNA(Leu) + H(+). The catalysed reaction is L-phenylalanyl-tRNA(Phe) + an N-terminal L-alpha-aminoacyl-[protein] = an N-terminal L-phenylalanyl-L-alpha-aminoacyl-[protein] + tRNA(Phe). Its function is as follows. Functions in the N-end rule pathway of protein degradation where it conjugates Leu, Phe and, less efficiently, Met from aminoacyl-tRNAs to the N-termini of proteins containing an N-terminal arginine or lysine. This is Leucyl/phenylalanyl-tRNA--protein transferase from Desulfatibacillum aliphaticivorans.